The following is a 205-amino-acid chain: uncharacterized protein (205 aa).

Positions 11–71 (DKRQAEILEA…RIIETGLDEG (61 aa)) constitute an HTH tetR-type domain. A DNA-binding region (H-T-H motif) is located at residues 34-53 (TMKDVVEESGFSRGGVYLYF).

This is an uncharacterized protein from Bacillus subtilis (strain 168).